Reading from the N-terminus, the 647-residue chain is Exoribonuclease 2 (647 aa).

The region spanning 191 to 517 (REDLCALPFV…VNHRLLKALI (327 aa)) is the RNB domain. Positions 563 to 645 (PTPFNAEIID…DTRSLIARPF (83 aa)) constitute an S1 motif domain.

The protein belongs to the RNR ribonuclease family. RNase II subfamily.

Its subcellular location is the cytoplasm. It catalyses the reaction Exonucleolytic cleavage in the 3'- to 5'-direction to yield nucleoside 5'-phosphates.. Its function is as follows. Involved in mRNA degradation. Hydrolyzes single-stranded polyribonucleotides processively in the 3' to 5' direction. The polypeptide is Exoribonuclease 2 (Edwardsiella piscicida).